Here is a 51-residue protein sequence, read N- to C-terminus: Lantibiotic flavucin (51 aa).

The propeptide occupies methionine 1–glutamine 20. Residues serine 23–cysteine 27 constitute a cross-link (lanthionine (Ser-Cys)). 3 consecutive cross-links (beta-methyllanthionine (Thr-Cys)) follow at residues threonine 28–cysteine 31, threonine 33–cysteine 38, and threonine 42–cysteine 45.

Belongs to the type A lantibiotic family. Post-translationally, maturation of lantibiotics involves the enzymatic conversion of Thr, and Ser into dehydrated AA and the formation of thioether bonds with cysteine. This is followed by membrane translocation and cleavage of the modified precursor.

Antimicrobial activity depends on the dehydration degree and integrity of flavucin. In terms of biological role, lanthionine-containing peptide antibiotic (lantibiotic) active on certain Gram-positive bacteria. The bactericidal activity of lantibiotics is based on depolarization of energized bacterial cytoplasmic membranes, initiated by the formation of aqueous transmembrane pores. Flavucin has high antimicrobial activity against several pathogenic bacteria such as S.aureus, E.faecalis, E.faecium and L.monocytogenes. Is also active against the Gram-negative P.aeruginosa. The sequence is that of Lantibiotic flavucin from Corynebacterium lipophiloflavum (strain ATCC 700352 / DSM 44291 / CCUG 37336 / JCM 10383 / DMMZ 1944).